Here is a 306-residue protein sequence, read N- to C-terminus: Lymphotoxin-beta (306 aa).

Topologically, residues 1–27 are cytoplasmic; it reads MGTRGLQGLGGRPQGRGCLLLAVAGAT. A helical; Signal-anchor for type II membrane protein membrane pass occupies residues 28–48; that stretch reads SLVTLLLAVPITVLAVLALVP. Residues 49-306 lie on the Extracellular side of the membrane; it reads QDQGRRVEKI…KTFFGAVMVG (258 aa). Disordered regions lie at residues 63-112 and 127-151; these read AQAQ…GPVA and PAAD…DLNP. The span at 74-85 shows a compositional bias: low complexity; the sequence is PSCILPSPSSLS. A compositionally biased stretch (polar residues) spans 95–112; that stretch reads QRSNASRNLASTSQGPVA. N-linked (GlcNAc...) asparagine glycosylation is present at Asn-98. In terms of domain architecture, THD spans 154 to 305; the sequence is PAAHLIGAWM…GKTFFGAVMV (152 aa). Residue Asn-284 is glycosylated (N-linked (GlcNAc...) asparagine).

The protein belongs to the tumor necrosis factor family. As to quaternary structure, heterotrimer of either two LTB and one LTA subunits or (less prevalent) two LTA and one LTB subunits.

The protein resides in the membrane. In terms of biological role, cytokine that binds to LTBR/TNFRSF3. May play a specific role in immune response regulation. Provides the membrane anchor for the attachment of the heterotrimeric complex to the cell surface. This chain is Lymphotoxin-beta (Ltb), found in Mus musculus (Mouse).